Here is a 270-residue protein sequence, read N- to C-terminus: 3-phenylpropionate-dihydrodiol/cinnamic acid-dihydrodiol dehydrogenase (270 aa).

Residue 10–34 (FITGGGSGLGLALVERFIEEGAQVA) coordinates NAD(+). A substrate-binding site is contributed by serine 143. The Proton acceptor role is filled by tyrosine 156.

Belongs to the short-chain dehydrogenases/reductases (SDR) family.

It catalyses the reaction 3-(cis-5,6-dihydroxycyclohexa-1,3-dien-1-yl)propanoate + NAD(+) = 3-(2,3-dihydroxyphenyl)propanoate + NADH + H(+). It carries out the reaction (2E)-3-(cis-5,6-dihydroxycyclohexa-1,3-dien-1-yl)prop-2-enoate + NAD(+) = (2E)-3-(2,3-dihydroxyphenyl)prop-2-enoate + NADH + H(+). Its pathway is aromatic compound metabolism; 3-phenylpropanoate degradation. In terms of biological role, converts 3-phenylpropionate-dihydrodiol (PP-dihydrodiol) and cinnamic acid-dihydrodiol (CI-dihydrodiol) into 3-(2,3-dihydroxylphenyl)propanoic acid (DHPP) and 2,3-dihydroxicinnamic acid (DHCI), respectively. The protein is 3-phenylpropionate-dihydrodiol/cinnamic acid-dihydrodiol dehydrogenase of Escherichia coli (strain ATCC 8739 / DSM 1576 / NBRC 3972 / NCIMB 8545 / WDCM 00012 / Crooks).